The following is a 249-amino-acid chain: MQMAPQMGYDRAITVFSPDGRLFQVEYAREAVKRGTTAVGIKAADGVVLLVDKRITSRLVEAESIEKIFQIDDHIGAATSGLVADARSLVDRARVEAQVNRVSYDELIGVEVISKKICDHKQTYTQYGGVRPYGTALLIAGVDDNKPRLFETDPSGALLEYKATAIGAGRNAVVEVFEADYREDMNIDAAILLGMDALYKAAEGKFDAGTLEVGVVSLEDKKFRKLGPEEVENYVHQILEKHKGNENKE.

The protein belongs to the peptidase T1A family. The 20S proteasome core is composed of 14 alpha and 14 beta subunits that assemble into four stacked heptameric rings, resulting in a barrel-shaped structure. The two inner rings, each composed of seven catalytic beta subunits, are sandwiched by two outer rings, each composed of seven alpha subunits. The catalytic chamber with the active sites is on the inside of the barrel. Has a gated structure, the ends of the cylinder being occluded by the N-termini of the alpha-subunits. Is capped at one or both ends by the proteasome regulatory ATPase, PAN.

The protein localises to the cytoplasm. With respect to regulation, the formation of the proteasomal ATPase PAN-20S proteasome complex, via the docking of the C-termini of PAN into the intersubunit pockets in the alpha-rings, triggers opening of the gate for substrate entry. Interconversion between the open-gate and close-gate conformations leads to a dynamic regulation of the 20S proteasome proteolysis activity. Functionally, component of the proteasome core, a large protease complex with broad specificity involved in protein degradation. The sequence is that of Proteasome subunit alpha from Methanosarcina mazei (strain ATCC BAA-159 / DSM 3647 / Goe1 / Go1 / JCM 11833 / OCM 88) (Methanosarcina frisia).